The primary structure comprises 310 residues: Ribonuclease Z (310 aa).

Zn(2+) contacts are provided by histidine 61, histidine 63, aspartate 65, histidine 66, and histidine 139. Aspartate 65 serves as the catalytic Proton acceptor. The tract at residues 150–175 (EDDRPGRFDRPKAEELGVPVGPKFGR) is disordered. The segment covering 153-164 (RPGRFDRPKAEE) has biased composition (basic and acidic residues). Zn(2+)-binding residues include aspartate 210 and histidine 268.

Belongs to the RNase Z family. Homodimer. The cofactor is Zn(2+).

The catalysed reaction is Endonucleolytic cleavage of RNA, removing extra 3' nucleotides from tRNA precursor, generating 3' termini of tRNAs. A 3'-hydroxy group is left at the tRNA terminus and a 5'-phosphoryl group is left at the trailer molecule.. Its function is as follows. Zinc phosphodiesterase, which displays some tRNA 3'-processing endonuclease activity. Probably involved in tRNA maturation, by removing a 3'-trailer from precursor tRNA. In Halorubrum lacusprofundi (strain ATCC 49239 / DSM 5036 / JCM 8891 / ACAM 34), this protein is Ribonuclease Z.